We begin with the raw amino-acid sequence, 306 residues long: SPbeta prophage-derived uncharacterized protein YonG (306 aa).

The polypeptide is SPbeta prophage-derived uncharacterized protein YonG (yonG) (Bacillus subtilis (strain 168)).